A 98-amino-acid chain; its full sequence is Protein FAM24A (98 aa).

The signal sequence occupies residues 1-29 (MFDLRTKVMIGIASTLLIAAIMLITLVFC).

This sequence belongs to the FAM24 family.

It localises to the secreted. This Mus musculus (Mouse) protein is Protein FAM24A (Fam24a).